Reading from the N-terminus, the 337-residue chain is Glyceraldehyde-3-phosphate dehydrogenase (337 aa).

Residues 11-12 (TV), 34-35 (TR), and glycine 110 each bind NADP(+). 139-141 (SCN) contacts D-glyceraldehyde 3-phosphate. Catalysis depends on cysteine 140, which acts as the Nucleophile. Aspartate 171 is an NADP(+) binding site. A D-glyceraldehyde 3-phosphate-binding site is contributed by 194–195 (HG). Position 300 (glutamine 300) interacts with NADP(+).

This sequence belongs to the glyceraldehyde-3-phosphate dehydrogenase family. Homotetramer.

Its subcellular location is the cytoplasm. It catalyses the reaction D-glyceraldehyde 3-phosphate + phosphate + NADP(+) = (2R)-3-phospho-glyceroyl phosphate + NADPH + H(+). The catalysed reaction is D-glyceraldehyde 3-phosphate + phosphate + NAD(+) = (2R)-3-phospho-glyceroyl phosphate + NADH + H(+). It participates in carbohydrate degradation; glycolysis; pyruvate from D-glyceraldehyde 3-phosphate: step 1/5. Exhibits a dual-cofactor specificity, with a marked preference for NADP(+) over NAD(+). In Methanothermus fervidus, this protein is Glyceraldehyde-3-phosphate dehydrogenase (gap).